An 82-amino-acid chain; its full sequence is Cytochrome b559 subunit alpha (82 aa).

A helical transmembrane segment spans residues 21-35; the sequence is VIHSITIPALFIAGW. His23 provides a ligand contact to heme.

Belongs to the PsbE/PsbF family. In terms of assembly, heterodimer of an alpha subunit and a beta subunit. PSII is composed of 1 copy each of membrane proteins PsbA, PsbB, PsbC, PsbD, PsbE, PsbF, PsbH, PsbI, PsbJ, PsbK, PsbL, PsbM, PsbT, PsbX, PsbY, PsbZ, Psb30/Ycf12, peripheral proteins PsbO, CyanoQ (PsbQ), PsbU, PsbV and a large number of cofactors. It forms dimeric complexes. Heme b is required as a cofactor.

The protein resides in the cellular thylakoid membrane. Functionally, this b-type cytochrome is tightly associated with the reaction center of photosystem II (PSII). PSII is a light-driven water:plastoquinone oxidoreductase that uses light energy to abstract electrons from H(2)O, generating O(2) and a proton gradient subsequently used for ATP formation. It consists of a core antenna complex that captures photons, and an electron transfer chain that converts photonic excitation into a charge separation. The sequence is that of Cytochrome b559 subunit alpha from Nostoc sp. (strain PCC 7120 / SAG 25.82 / UTEX 2576).